Consider the following 166-residue polypeptide: Large ribosomal subunit protein uL10 (166 aa).

The protein belongs to the universal ribosomal protein uL10 family. As to quaternary structure, part of the ribosomal stalk of the 50S ribosomal subunit. The N-terminus interacts with L11 and the large rRNA to form the base of the stalk. The C-terminus forms an elongated spine to which L12 dimers bind in a sequential fashion forming a multimeric L10(L12)X complex.

Forms part of the ribosomal stalk, playing a central role in the interaction of the ribosome with GTP-bound translation factors. This chain is Large ribosomal subunit protein uL10 (rplJ), found in Streptococcus pyogenes serotype M1.